The primary structure comprises 211 residues: Thymidylate kinase (211 aa).

An ATP-binding site is contributed by 12–19 (GIDGSGKS).

This sequence belongs to the thymidylate kinase family.

It carries out the reaction dTMP + ATP = dTDP + ADP. Functionally, phosphorylation of dTMP to form dTDP in both de novo and salvage pathways of dTTP synthesis. The sequence is that of Thymidylate kinase from Ruegeria pomeroyi (strain ATCC 700808 / DSM 15171 / DSS-3) (Silicibacter pomeroyi).